Here is a 283-residue protein sequence, read N- to C-terminus: Pantothenate synthetase (283 aa).

26-33 (MGNLHEGH) serves as a coordination point for ATP. Residue histidine 33 is the Proton donor of the active site. Glutamine 57 provides a ligand contact to (R)-pantoate. Glutamine 57 serves as a coordination point for beta-alanine. 144-147 (GKKD) is an ATP binding site. Position 150 (glutamine 150) interacts with (R)-pantoate. ATP contacts are provided by residues valine 173 and 181–184 (LSSR).

The protein belongs to the pantothenate synthetase family. As to quaternary structure, homodimer.

The protein localises to the cytoplasm. It catalyses the reaction (R)-pantoate + beta-alanine + ATP = (R)-pantothenate + AMP + diphosphate + H(+). Its pathway is cofactor biosynthesis; (R)-pantothenate biosynthesis; (R)-pantothenate from (R)-pantoate and beta-alanine: step 1/1. Functionally, catalyzes the condensation of pantoate with beta-alanine in an ATP-dependent reaction via a pantoyl-adenylate intermediate. The chain is Pantothenate synthetase from Ralstonia pickettii (strain 12J).